A 101-amino-acid polypeptide reads, in one-letter code: Venom peptide Pc (101 aa).

Residues 1–20 form the signal peptide; the sequence is MSHLRIAVIFLCTLFALTAG.

This sequence belongs to the scorpion La1-like peptide family. Contains 4 disulfide bonds. In terms of tissue distribution, expressed by the venom gland.

It is found in the secreted. In Pandinus cavimanus (Tanzanian red clawed scorpion), this protein is Venom peptide Pc.